The sequence spans 294 residues: Nucleotide-binding protein Maqu_2718 (294 aa).

Residue 8-15 participates in ATP binding; the sequence is GRSGSGKS. GTP is bound at residue 61–64; it reads DARN.

The protein belongs to the RapZ-like family.

Functionally, displays ATPase and GTPase activities. This is Nucleotide-binding protein Maqu_2718 from Marinobacter nauticus (strain ATCC 700491 / DSM 11845 / VT8) (Marinobacter aquaeolei).